The primary structure comprises 505 residues: Outer capsid protein VP5 (505 aa).

An involved in membrane permeabilization region spans residues 1–42 (MGKFTSFLKRAGNATKRALTSDSAKKMYKLAGKTLQRVVESE).

Belongs to the orbivirus VP5 family.

It localises to the virion. VP5 protein is one of the two proteins (with VP2) which constitute the virus particle outer capsid. Acts as a membrane permeabilization protein that mediates release of viral particles from endosomal compartments into the cytoplasm. Permeabilization activity is probably negatively regulated by VP2 and is triggered by endosomal degradation of VP2 and exposure to low pH. This is Outer capsid protein VP5 (Segment-6) from African horse sickness virus (AHSV).